The chain runs to 716 residues: Polycystin-2 (716 aa).

Basic and acidic residues-rich tracts occupy residues 1–10 (MNYGAADERW) and 30–41 (MVSEEYEHDKKK). A disordered region spans residues 1–44 (MNYGAADERWANPPQPVAAAEHGPSFDHSMVSEEYEHDKKKNPA). Residues 1–72 (MNYGAADERW…SDGKIKLTAR (72 aa)) are Cytoplasmic-facing. The helical transmembrane segment at 73-93 (SFMEVGGYAVFLIVLVYVAFA) threads the bilayer. Topologically, residues 94 to 324 (QNSIQSYYYS…YQTSGGTRMM (231 aa)) are extracellular. Asn-150 and Asn-177 each carry an N-linked (GlcNAc...) asparagine glycan. A disulfide bridge connects residues Cys-180 and Cys-193. Residues 325 to 345 (IFEGIFCGFILYFIFEELFAI) form a helical membrane-spanning segment. The Cytoplasmic portion of the chain corresponds to 346-355 (GRHRLHYLTQ). The helical transmembrane segment at 356-376 (FWNLVDVVLLGFSVATIILSV) threads the bilayer. Residue Asn-377 is glycosylated (N-linked (GlcNAc...) asparagine). At 377 to 409 (NRTKTGVNRVNSVIENGLTNAPFDDVTSSENSY) the chain is on the extracellular side. The chain crosses the membrane as a helical span at residues 410–430 (LNIKACVVFVAWVKVFKFISV). Residues 431-447 (NKTMSQLSSTLTRSAKD) are Cytoplasmic-facing. The chain crosses the membrane as a helical span at residues 448 to 468 (IGGFAVMFAVFFFAFAQFGYL). Over 469–482 (CFGTQIADYSNLYN) the chain is Extracellular. Residues 483-497 (SAFALLRLILGDFNF) constitute an intramembrane region (pore-forming). At 498-510 (SALESCNRFFGPA) the chain is on the extracellular side. Residues 511–531 (FFIAYVFFVSFILLNMFLAII) form a helical membrane-spanning segment. Residues 532-716 (NDSYVEVKAE…ITSIADKKEE (185 aa)) lie on the Cytoplasmic side of the membrane. The residue at position 534 (Ser-534) is a Phosphoserine; by CK2. The stretch at 613–680 (EKVAEDIADE…IEKQRVQQQD (68 aa)) forms a coiled coil. The segment at 696 to 716 (RNRESAARRPTITSIADKKEE) is disordered.

Belongs to the polycystin family. In terms of processing, phosphorylated. CK2 (kin-3 and kin-10) and calcineurin act antagonistically to regulate the phosphorylation state. In terms of tissue distribution, exclusively expressed in a subset of 3 categories of adult male sensory neurons: ray neurons, hook neurons and head cephalic (CEM) neurons. Expressed in the male tail.

It localises to the cell membrane. It is found in the cell projection. The protein resides in the cilium membrane. The protein localises to the cilium. Its subcellular location is the axon. It localises to the dendrite. It is found in the perikaryon. The protein resides in the endoplasmic reticulum membrane. In terms of biological role, functions as a calcium permeable cation channel. Required for 2 aspects of male mating behavior: response to hermaphrodite contact and vulva location. Acts in the same pathway as lov-1 and atp-2 in response behavior. The polypeptide is Polycystin-2 (Caenorhabditis elegans).